The following is a 203-amino-acid chain: Glycerol-3-phosphate acyltransferase (203 aa).

5 helical membrane-spanning segments follow: residues 12–32, 66–86, 88–108, 118–138, and 159–179; these read ATLLCLAFGYLLGSIPFGLIL, TLLLDALKGTAAAAIASLWGV, AGIAAGLAAFLGHLFPVWLSF, IGVLLGLAPLMVPAFAAIWLA, and IALYATGYGKVALLFALMTVI.

Belongs to the PlsY family. Probably interacts with PlsX.

The protein localises to the cell inner membrane. The catalysed reaction is an acyl phosphate + sn-glycerol 3-phosphate = a 1-acyl-sn-glycero-3-phosphate + phosphate. It functions in the pathway lipid metabolism; phospholipid metabolism. In terms of biological role, catalyzes the transfer of an acyl group from acyl-phosphate (acyl-PO(4)) to glycerol-3-phosphate (G3P) to form lysophosphatidic acid (LPA). This enzyme utilizes acyl-phosphate as fatty acyl donor, but not acyl-CoA or acyl-ACP. The polypeptide is Glycerol-3-phosphate acyltransferase (Sinorhizobium fredii (strain NBRC 101917 / NGR234)).